The sequence spans 103 residues: ATP-dependent Clp protease adapter protein ClpS 1 (103 aa).

This sequence belongs to the ClpS family. As to quaternary structure, binds to the N-terminal domain of the chaperone ClpA.

Functionally, involved in the modulation of the specificity of the ClpAP-mediated ATP-dependent protein degradation. The polypeptide is ATP-dependent Clp protease adapter protein ClpS 1 (Rhodopseudomonas palustris (strain ATCC BAA-98 / CGA009)).